A 348-amino-acid polypeptide reads, in one-letter code: 11-beta-hydroxysteroid dehydrogenase A (348 aa).

The helical; Signal-anchor for type II membrane protein transmembrane segment at 10–30 threads the bilayer; the sequence is LIAPPFTFFFLLFFLPPFQIF. Positions 13–26 match the Proline-knob motif; it reads PPFTFFFLLFFLPP. NADP(+) is bound by residues 54–80, aspartate 105, and 132–135; these read GASS…AARR and NAGI. Serine 184 provides a ligand contact to substrate. Tyrosine 197 functions as the Proton acceptor in the catalytic mechanism. NADP(+)-binding positions include 197–201 and lysine 201; that span reads YNASK.

Belongs to the short-chain dehydrogenases/reductases (SDR) family. As to expression, expressed in seeds (at protein level). Not expressed in stem, leaf or root (at protein level).

It localises to the lipid droplet. The protein localises to the membrane. The enzyme catalyses an 11beta-hydroxysteroid + NADP(+) = an 11-oxosteroid + NADPH + H(+). It carries out the reaction an 11beta-hydroxysteroid + NAD(+) = an 11-oxosteroid + NADH + H(+). It catalyses the reaction corticosterone + NADP(+) = 11-dehydrocorticosterone + NADPH + H(+). The catalysed reaction is corticosterone + NAD(+) = 11-dehydrocorticosterone + NADH + H(+). The enzyme catalyses 17beta-estradiol + NADP(+) = estrone + NADPH + H(+). It carries out the reaction 17beta-estradiol + NAD(+) = estrone + NADH + H(+). Its function is as follows. Has dehydrogenase activity against corticosterone (11 beta-hydroxysteroid) and estradiol (17 beta-hydroxysteroid), with higher activity against estradiol. Possesses higher dehydrogenase activity with NADP(+) than NAD(+) regardless of the sterol substrate. May be involved in signal transduction regulated by various sterols. This chain is 11-beta-hydroxysteroid dehydrogenase A, found in Sesamum indicum (Oriental sesame).